The chain runs to 555 residues: Cilia- and flagella-associated protein 184 (555 aa).

Basic and acidic residues predominate over residues 1 to 12 (MDVSSEHTKDPG). Residues 1–202 (MDVSSEHTKD…KSQEEGKRLY (202 aa)) form a disordered region. 2 stretches are compositionally biased toward acidic residues: residues 41 to 54 (GELE…EEEQ) and 95 to 105 (PEPEEPAEVGA). A compositionally biased stretch (low complexity) spans 106-117 (EEPAQPEPGAGP). Acidic residues predominate over residues 118–131 (EELEAEAGAEELEQ). The segment covering 174 to 202 (ETQRDGAESKERDGEGRPAKSQEEGKRLY) has biased composition (basic and acidic residues). 2 coiled-coil regions span residues 305 to 441 (YHQE…NSVQ) and 505 to 531 (DSLL…LKRH).

It belongs to the CFAP184 family. Forms a complex with CFAP263; the interaction is required for functional activity in cilia.

It localises to the cell projection. The protein localises to the cilium. It is found in the cytoplasm. Its subcellular location is the cytoskeleton. The protein resides in the microtubule organizing center. It localises to the centrosome. In complex with CFAP263, acts as a regulator of ciliary beating that connects radial spoke 3 (RS3) to the inner dynein arm (IDA) and the nexin-dynein regulatory complex (N-DRC). The complex is positioned parallel to N-DRC and forms a connection between the arch at the base of RS3, the IDA tail and N-DRC. This Homo sapiens (Human) protein is Cilia- and flagella-associated protein 184.